The chain runs to 436 residues: Serine/threonine-protein kinase STK11 (436 aa).

Ser31 carries the post-translational modification Phosphoserine. 2 positions are modified to N6-acetyllysine: Lys44 and Lys48. Residues 45–90 (LIGKYLMGDLLGEGSYGKVKEVLDSETLCRRAVKILKKKKLRRIPN) form a sufficient for interaction with SIRT1 region. A Protein kinase domain is found at 49-309 (YLMGDLLGEG…IRQIRQHSWF (261 aa)). Residues 55-63 (LGEGSYGKV) and Lys78 contribute to the ATP site. N6-acetyllysine occurs at positions 96 and 97. Asp176 functions as the Proton acceptor in the catalytic mechanism. Thr189 bears the Phosphothreonine; by autocatalysis mark. Lys296 and Lys311 each carry N6-acetyllysine. A Phosphoserine modification is found at Ser325. At Thr336 the chain carries Phosphothreonine; by autocatalysis. Thr366 carries the post-translational modification Phosphothreonine; by ATM and autocatalysis. Positions 398 to 421 (TEPQLSSKVKPEGRPGTANPARKV) are disordered. The residue at position 403 (Ser403) is a Phosphoserine. Lys420 is subject to N6-acetyllysine. The S-palmitoyl cysteine moiety is linked to residue Cys422. Lys426 is modified (N6-acetyllysine). Ser431 carries the phosphoserine; by autocatalysis, PKA, PKC/PRKCZ and RPS6KA1 modification. Cysteine methyl ester is present on Cys433. The S-farnesyl cysteine moiety is linked to residue Cys433. At Lys434 the chain carries N6-acetyllysine. The propeptide at 434–436 (KQQ) is removed in mature form.

The protein belongs to the protein kinase superfamily. CAMK Ser/Thr protein kinase family. LKB1 subfamily. As to quaternary structure, catalytic component of a trimeric complex composed of STK11/LKB1, STRAD (STRADA or STRADB) and CAB39/MO25 (CAB39/MO25alpha or CAB39L/MO25beta): the complex tethers STK11/LKB1 in the cytoplasm and stimulates its catalytic activity. Found in a ternary complex composed of SMAD4, STK11/LKB1 and STK11IP. Interacts with p53/TP53, SMAD4, STK11IP and WDR6. Interacts with NR4A1. Interacts with NISCH; this interaction may increase STK11 activity. Interacts with PTEN, leading to PTEN phosphorylation. Interacts with SIRT1; the interaction deacetylates STK11. Interacts with CDKN1A. Requires Mg(2+) as cofactor. Mn(2+) serves as cofactor. Phosphorylated by ATM at Thr-366 following ionizing radiation (IR). Phosphorylation at Ser-431 by RPS6KA1 and/or some PKA is required to inhibit cell growth. Phosphorylation at Ser-431 is also required during neuronal polarization to mediate phosphorylation of BRSK1 and BRSK2. Phosphorylation by PKC/PRKCZ at Ser-399 in isoform 2 promotes metformin (or peroxynitrite)-induced nuclear export of STK11 and activation of AMPK. UV radiation-induced phosphorylation at Thr-366 mediates CDKN1A degradation. Post-translationally, acetylated. Deacetylation at Lys-48 enhances cytoplasmic localization and kinase activity in vitro. Widely expressed. In terms of tissue distribution, predominantly expressed in testis (at protein level). As to expression, expressed in adult brain and liver and absent from tissues derived from postnatal day 7.

It localises to the nucleus. The protein resides in the cytoplasm. Its subcellular location is the membrane. It is found in the mitochondrion. The catalysed reaction is L-seryl-[protein] + ATP = O-phospho-L-seryl-[protein] + ADP + H(+). It carries out the reaction L-threonyl-[protein] + ATP = O-phospho-L-threonyl-[protein] + ADP + H(+). With respect to regulation, activated by forming a complex with STRAD (STRADA or STRADB) and CAB39/MO25 (CAB39/MO25alpha or CAB39L/MO25beta): STRADA (or STRADB)-binding promotes a conformational change of STK11/LKB1 in an active conformation, which is stabilized by CAB39/MO25alpha (or CAB39L/MO25beta) interacting with the STK11/LKB1 activation loop. Sequestration in the nucleus by NR4A1 prevents it from phosphorylating and activating cytoplasmic AMPK. Functionally, tumor suppressor serine/threonine-protein kinase that controls the activity of AMP-activated protein kinase (AMPK) family members, thereby playing a role in various processes such as cell metabolism, cell polarity, apoptosis and DNA damage response. Acts by phosphorylating the T-loop of AMPK family proteins, thus promoting their activity: phosphorylates PRKAA1, PRKAA2, BRSK1, BRSK2, MARK1, MARK2, MARK3, MARK4, NUAK1, NUAK2, SIK1, SIK2, SIK3 and SNRK but not MELK. Also phosphorylates non-AMPK family proteins such as STRADA, PTEN and possibly p53/TP53. Acts as a key upstream regulator of AMPK by mediating phosphorylation and activation of AMPK catalytic subunits PRKAA1 and PRKAA2 and thereby regulates processes including: inhibition of signaling pathways that promote cell growth and proliferation when energy levels are low, glucose homeostasis in liver, activation of autophagy when cells undergo nutrient deprivation, and B-cell differentiation in the germinal center in response to DNA damage. Also acts as a regulator of cellular polarity by remodeling the actin cytoskeleton. Required for cortical neuron polarization by mediating phosphorylation and activation of BRSK1 and BRSK2, leading to axon initiation and specification. Involved in DNA damage response: interacts with p53/TP53 and recruited to the CDKN1A/WAF1 promoter to participate in transcription activation. Able to phosphorylate p53/TP53; the relevance of such result in vivo is however unclear and phosphorylation may be indirect and mediated by downstream STK11/LKB1 kinase NUAK1. Also acts as a mediator of p53/TP53-dependent apoptosis via interaction with p53/TP53: translocates to the mitochondrion during apoptosis and regulates p53/TP53-dependent apoptosis pathways. Regulates UV radiation-induced DNA damage response mediated by CDKN1A. In association with NUAK1, phosphorylates CDKN1A in response to UV radiation and contributes to its degradation which is necessary for optimal DNA repair. Has a role in spermiogenesis. The chain is Serine/threonine-protein kinase STK11 from Mus musculus (Mouse).